The chain runs to 749 residues: Catalase-peroxidase 2 (749 aa).

An N-terminal signal peptide occupies residues 1–27; the sequence is MFKRTIPLFAAFTLAISPSVFPNYAYA. Residues 107 to 229 constitute a cross-link (tryptophyl-tyrosyl-methioninium (Trp-Tyr) (with M-255)); the sequence is WHAAGTYRIY…LAATVMGLIY (123 aa). The Proton acceptor role is filled by histidine 108. Positions 229–255 form a cross-link, tryptophyl-tyrosyl-methioninium (Tyr-Met) (with W-107); the sequence is YVNPEGPNGVPDPLAAAEKIRETFGRM. Position 270 (histidine 270) interacts with heme b.

It belongs to the peroxidase family. Peroxidase/catalase subfamily. As to quaternary structure, homodimer or homotetramer. Heme b is required as a cofactor. In terms of processing, formation of the three residue Trp-Tyr-Met cross-link is important for the catalase, but not the peroxidase activity of the enzyme.

The catalysed reaction is H2O2 + AH2 = A + 2 H2O. It carries out the reaction 2 H2O2 = O2 + 2 H2O. Bifunctional enzyme with both catalase and broad-spectrum peroxidase activity. This is Catalase-peroxidase 2 from Legionella pneumophila (strain Paris).